We begin with the raw amino-acid sequence, 554 residues long: DDB1- and CUL4-associated factor 11 homolog (554 aa).

The interval 24–52 is disordered; sequence QRMKNRNDSDTDFSDDDEETSGGCPKMTP. Acidic residues predominate over residues 33–43; that stretch reads DTDFSDDDEET. WD repeat units lie at residues 245 to 284, 288 to 328, 336 to 375, 414 to 458, and 461 to 500; these read QNQC…RIRT, AHED…DGDV, GHRD…CQGG, GHSV…VSRR, and GHQA…EGVI. A disordered region spans residues 527–554; that stretch reads PQRKLRKPISARNAKCPTTSSEPDDFQI.

This sequence belongs to the WD repeat LEC14B family.

Its function is as follows. Involved in regulation of lifespan. Required for dopaminergic CEP neuron degeneration in response to Mn(2+). The polypeptide is DDB1- and CUL4-associated factor 11 homolog (wdr-23) (Caenorhabditis briggsae).